The primary structure comprises 181 residues: Achaete-scute homolog 3 (181 aa).

Positions 93–106 are basic motif; sequence AFTRKRNERERQRV. One can recognise a bHLH domain in the interval 93-145; sequence AFTRKRNERERQRVKCVNEGYAQLRHHLPEEYLEKRLSKVETLRAAIKYINYL. Residues 107–145 form a helix-loop-helix motif region; it reads KCVNEGYAQLRHHLPEEYLEKRLSKVETLRAAIKYINYL.

As to quaternary structure, efficient DNA binding requires dimerization with another bHLH protein. In terms of tissue distribution, widely expressed in fetal and adult tissues.

The protein resides in the nucleus. Functionally, transcriptional repressor. Inhibits myogenesis. Plays a role in progenitor cells which differentiate into ductal and acinar, but not myoepithelial, cell lineages in the salivary glands. Involved in the functions of the microvillar cells and Bowman's glands and probably, in a non-cell-autonomous manner, in the development or regeneration of a complete olfactory epithelium (OE). In Homo sapiens (Human), this protein is Achaete-scute homolog 3.